The chain runs to 156 residues: Small ribosomal subunit protein uS7 (156 aa).

Belongs to the universal ribosomal protein uS7 family. Part of the 30S ribosomal subunit. Contacts proteins S9 and S11.

One of the primary rRNA binding proteins, it binds directly to 16S rRNA where it nucleates assembly of the head domain of the 30S subunit. Is located at the subunit interface close to the decoding center, probably blocks exit of the E-site tRNA. The sequence is that of Small ribosomal subunit protein uS7 from Parafrankia sp. (strain EAN1pec).